The sequence spans 402 residues: Beta-1,4-galactosyltransferase 1 (402 aa).

Over 1-24 (MKFREPLLGGSAAMPGASLQRACR) the chain is Cytoplasmic. The helical; Signal-anchor for type II membrane protein transmembrane segment at 25 to 44 (LLVAVCALHLGVTLVYYLAG) threads the bilayer. The Lumenal segment spans residues 45–402 (RDLRRLPQLV…KITVDIGTPS (358 aa)). The interval 77-130 (LRLRGVAPPPPLQNSSKPRSRAPSNLDAYSHPGPGPGPGSNLTSAPVPSTTTRS) is disordered. 2 N-linked (GlcNAc...) asparagine glycosylation sites follow: N90 and N117. A compositionally biased stretch (polar residues) spans 116–130 (SNLTSAPVPSTTTRS). C134 and C176 are oxidised to a cystine. UDP-alpha-D-galactose is bound by residues 187-191 (PFRNR), 226-228 (FNR), 253-254 (VD), and W314. Cysteines 247 and 266 form a disulfide. Position 254 (D254) interacts with Mn(2+). 316-319 (GEDD) contacts N-acetyl-D-glucosamine. H347 serves as a coordination point for Mn(2+). UDP-alpha-D-galactose is bound at residue 347–349 (HSR). R359 contributes to the N-acetyl-D-glucosamine binding site.

The protein belongs to the glycosyltransferase 7 family. As to quaternary structure, homodimer; and heterodimer with alpha-lactalbumin to form lactose synthase. Interacts (via N-terminal cytoplasmic domain) with UBE2Q1 (via N-terminus); the interaction is direct. Mn(2+) is required as a cofactor. The soluble form derives from the membrane forms by proteolytic processing. As to expression, detected in milk (at protein level).

It localises to the golgi apparatus. It is found in the golgi stack membrane. Its subcellular location is the cell membrane. The protein resides in the cell surface. The protein localises to the cell projection. It localises to the filopodium. It is found in the secreted. It catalyses the reaction D-glucose + UDP-alpha-D-galactose = lactose + UDP + H(+). The catalysed reaction is an N-acetyl-beta-D-glucosaminyl derivative + UDP-alpha-D-galactose = a beta-D-galactosyl-(1-&gt;4)-N-acetyl-beta-D-glucosaminyl derivative + UDP + H(+). It carries out the reaction N-acetyl-D-glucosamine + UDP-alpha-D-galactose = beta-D-galactosyl-(1-&gt;4)-N-acetyl-D-glucosamine + UDP + H(+). The enzyme catalyses a beta-D-GlcNAc-(1-&gt;3)-beta-D-Gal-(1-&gt;4)-beta-D-Glc-(1&lt;-&gt;1)-Cer(d18:1(4E)) + UDP-alpha-D-galactose = a neolactoside nLc4Cer(d18:1(4E)) + UDP + H(+). It catalyses the reaction a beta-D-glucosylceramide + UDP-alpha-D-galactose = a beta-D-galactosyl-(1-&gt;4)-beta-D-glucosyl-(1&lt;-&gt;1)-ceramide + UDP + H(+). The catalysed reaction is a neolactoside IV(3)-beta-GlcNAc-nLc4Cer + UDP-alpha-D-galactose = a neolactoside nLc6Cer + UDP + H(+). The protein operates within protein modification; protein glycosylation. In terms of biological role, the Golgi complex form catalyzes the production of lactose in the lactating mammary gland and could also be responsible for the synthesis of complex-type N-linked oligosaccharides in many glycoproteins as well as the carbohydrate moieties of glycolipids. Its function is as follows. The cell surface form functions as a recognition molecule during a variety of cell to cell and cell to matrix interactions, as those occurring during development and egg fertilization, by binding to specific oligosaccharide ligands on opposing cells or in the extracellular matrix. The secreted form is responsible for the synthesis of complex-type to N-linked oligosaccharides in many glycoproteins as well as the carbohydrate moieties of glycolipids. This chain is Beta-1,4-galactosyltransferase 1 (B4GALT1), found in Bos taurus (Bovine).